Here is a 432-residue protein sequence, read N- to C-terminus: Adenylosuccinate synthetase (432 aa).

GTP is bound by residues 13-19 and 41-43; these read GDEGKGK and GHT. Asp14 (proton acceptor) is an active-site residue. Mg(2+) contacts are provided by Asp14 and Gly41. IMP-binding positions include 14-17, 39-42, Thr130, Arg144, Gln225, Thr240, and Arg304; these read DEGK and NAGH. The active-site Proton donor is the His42. 300–306 is a binding site for substrate; that stretch reads AVTGRPR. GTP is bound by residues Arg306, 332–334, and 415–417; these read KLD and STG.

This sequence belongs to the adenylosuccinate synthetase family. In terms of assembly, homodimer. The cofactor is Mg(2+).

The protein localises to the cytoplasm. The enzyme catalyses IMP + L-aspartate + GTP = N(6)-(1,2-dicarboxyethyl)-AMP + GDP + phosphate + 2 H(+). The protein operates within purine metabolism; AMP biosynthesis via de novo pathway; AMP from IMP: step 1/2. In terms of biological role, plays an important role in the de novo pathway of purine nucleotide biosynthesis. Catalyzes the first committed step in the biosynthesis of AMP from IMP. The sequence is that of Adenylosuccinate synthetase from Pasteurella multocida (strain Pm70).